We begin with the raw amino-acid sequence, 311 residues long: tRNA-cytidine(32) 2-sulfurtransferase (311 aa).

The short motif at Ser-47–Ser-52 is the PP-loop motif element. The [4Fe-4S] cluster site is built by Cys-122, Cys-125, and Cys-213.

It belongs to the TtcA family. As to quaternary structure, homodimer. Mg(2+) is required as a cofactor. Requires [4Fe-4S] cluster as cofactor.

The protein localises to the cytoplasm. It catalyses the reaction cytidine(32) in tRNA + S-sulfanyl-L-cysteinyl-[cysteine desulfurase] + AH2 + ATP = 2-thiocytidine(32) in tRNA + L-cysteinyl-[cysteine desulfurase] + A + AMP + diphosphate + H(+). It participates in tRNA modification. In terms of biological role, catalyzes the ATP-dependent 2-thiolation of cytidine in position 32 of tRNA, to form 2-thiocytidine (s(2)C32). The sulfur atoms are provided by the cysteine/cysteine desulfurase (IscS) system. The sequence is that of tRNA-cytidine(32) 2-sulfurtransferase from Shigella boydii serotype 18 (strain CDC 3083-94 / BS512).